Here is a 28-residue protein sequence, read N- to C-terminus: Conotoxin as14b (28 aa).

2 disulfide bridges follow: C7–C27 and C11–C23.

Belongs to the conotoxin L superfamily. Expressed by the venom duct.

The protein resides in the secreted. In vivo, intracranial injection elicits scratching and grooming activity in mice, and causes body and rear limb extension and tail curling immediately upon injection. In Conus cancellatus (Cancellate cone), this protein is Conotoxin as14b.